A 2460-amino-acid polypeptide reads, in one-letter code: Reducing polyketide synthase BOA6 (2460 aa).

Residues 5–438 (NEPIAVIGTG…GTNAHAILES (434 aa)) enclose the Ketosynthase family 3 (KS3) domain. Residues Cys-178, His-317, and His-360 each act as for beta-ketoacyl synthase activity in the active site. Positions 549 to 864 (VFTGQGAQWP…PYTGVLSRGD (316 aa)) are malonyl-CoA:ACP transacylase (MAT) domain. An N-terminal hotdog fold region spans residues 938–1073 (HELLGVRCAD…GRIKMTLGTP (136 aa)). The interval 938–1244 (HELLGVRCAD…QMQSFTAARP (307 aa)) is dehydratase (DH) domain. The PKS/mFAS DH domain occupies 938-1245 (HELLGVRCAD…MQSFTAARPS (308 aa)). The active-site Proton acceptor; for dehydratase activity is His-970. The segment at 1088 to 1245 (LGPLNVDRFY…MQSFTAARPS (158 aa)) is C-terminal hotdog fold. The active-site Proton donor; for dehydratase activity is the Asp-1145. Positions 1399-1586 (NKFVTAAMKK…VNDFKDKSRY (188 aa)) are methyltransferase (MT) domain. Residues 2098-2266 (SYLLAGLTGD…KRGGVASVIH (169 aa)) are ketoreductase (KR) domain. Residues 2378–2456 (DEVLGVMQKC…DLCELACEEY (79 aa)) enclose the Carrier domain. Position 2416 is an O-(pantetheine 4'-phosphoryl)serine (Ser-2416).

Its pathway is polyketide biosynthesis. Its function is as follows. Reducing polyketide synthase; part of the gene cluster A that mediates the biosynthesis of botcinic acid and its botcinin derivatives, acetate-derived polyketides that contribute to virulence when combined with the sesquiterpene botrydial. Botcinic acid and its derivatives have been shown to induce chlorosis and necrosis during host plant infection, but also have antifungal activities. Two polyketide synthases, BOA6 and BOA9, are involved in the biosynthesis of botcinins. BOA6 mediates the formation of the per-methylated tetraketide core by condensation of four units of malonyl-CoA with one unit of acetyl-CoA, which would be methylated in activated methylene groups to yield a bicyclic acid intermediate that could then either be converted to botrylactone derivatives or lose the starter acetate unit through a retro-Claisen type C-C bond cleavage to yield botcinin derivatives. The second polyketide synthase, BOA9, is probably required for the biosynthesis of the tetraketide side chain of botcinins. The methyltransferase (MT) domain within BOA6 is probably responsible for the incorporation of four methyl groups. The trans-enoyl reductase BOA5 might take over the enoyl reductase function of BOA6 that misses an ER domain. The monooxygenases BOA2, BOA3 and BOA4 might be involved in further hydroxylations at C4, C5 and C8, whereas BOA7, close to BOA9, could potentially be involved in the hydroxylation at C4 in the side chain of botcinins. This chain is Reducing polyketide synthase BOA6, found in Botryotinia fuckeliana (strain B05.10) (Noble rot fungus).